Reading from the N-terminus, the 431-residue chain is Glucose-1-phosphate adenylyltransferase (431 aa).

Alpha-D-glucose 1-phosphate is bound by residues Y108, G174, 189–190 (EK), and S207.

Belongs to the bacterial/plant glucose-1-phosphate adenylyltransferase family. Homotetramer.

It catalyses the reaction alpha-D-glucose 1-phosphate + ATP + H(+) = ADP-alpha-D-glucose + diphosphate. Its pathway is glycan biosynthesis; glycogen biosynthesis. Functionally, involved in the biosynthesis of ADP-glucose, a building block required for the elongation reactions to produce glycogen. Catalyzes the reaction between ATP and alpha-D-glucose 1-phosphate (G1P) to produce pyrophosphate and ADP-Glc. The chain is Glucose-1-phosphate adenylyltransferase from Actinobacillus succinogenes (strain ATCC 55618 / DSM 22257 / CCUG 43843 / 130Z).